Consider the following 483-residue polypeptide: Uroporphyrinogen-III C-methyltransferase (483 aa).

This sequence belongs to the precorrin methyltransferase family.

It carries out the reaction uroporphyrinogen III + 2 S-adenosyl-L-methionine = precorrin-2 + 2 S-adenosyl-L-homocysteine + H(+). This is Uroporphyrinogen-III C-methyltransferase (nasF) from Bacillus subtilis (strain 168).